We begin with the raw amino-acid sequence, 138 residues long: Small ribosomal subunit protein uS11c (138 aa).

It belongs to the universal ribosomal protein uS11 family. Part of the 30S ribosomal subunit.

It localises to the plastid. It is found in the chloroplast. This is Small ribosomal subunit protein uS11c from Morus indica (Mulberry).